The primary structure comprises 126 residues: uncharacterized protein (126 aa).

In terms of domain architecture, HTH hxlR-type spans 20-118; the sequence is CPSREVLKHV…WIELNLPEVL (99 aa).

This is an uncharacterized protein from Escherichia coli (strain K12).